The chain runs to 241 residues: Putative integrase ORF241 (241 aa).

A Tyr recombinase domain is found at 82 to 241 (VEAKKTLVSA…AIEMLRKLAD (160 aa)). Active-site residues include R119, K144, H191, R194, and H217. Residue Y226 is the O-(3'-phospho-DNA)-tyrosine intermediate of the active site.

Belongs to the 'phage' integrase family.

Functionally, this protein may encode an integrase, which is necessary for integration of the viral DNA into host genome. This is Putative integrase ORF241 from Acidianus convivator (ATV).